A 351-amino-acid chain; its full sequence is Protein disulfide isomerase CRELD2 (351 aa).

Residues 1–21 form the signal peptide; that stretch reads MRPPAPAVLGLLLLLLPTGEA. A CXXC motif is present at residues 28–31; it reads CKRC. Intrachain disulfides connect cysteine 28–cysteine 31, cysteine 137–cysteine 151, cysteine 145–cysteine 163, and cysteine 165–cysteine 174. The region spanning 133-175 is the EGF-like 1 domain; sequence DCLACQGGSERPCSGNGHCVGDGTREGDGSCQCHLGYQGPLCS. The FU 1 repeat unit spans residues 190-237; sequence HSICSACDEACKTCVGPTNRDCGQCEVGWVRQDDACVDVDECAAEPPP. N-linked (GlcNAc...) asparagine glycosylation is present at asparagine 248. An FU 2 repeat occupies 250–297; that stretch reads SFVCEECDPTCMGCTGKGPTQCRECIAGYSKESGQCEDIDECSLAEKP. A CXXC motif is present at residues 260-263; it reads CMGC. Cystine bridges form between cysteine 260-cysteine 263, cysteine 291-cysteine 305, cysteine 298-cysteine 314, and cysteine 316-cysteine 327. One can recognise an EGF-like 2; calcium-binding domain in the interval 287-328; sequence DIDECSLAEKPCLRDNENCYNTPGSFVCVCPDGFEEAEDTCV. The disordered stretch occupies residues 329 to 351; that stretch reads QTRPAGAEATEASPTQPPSREDL.

The protein belongs to the CRELD family. Interacts with CHRNA4. Component of a complex containing at least CRELD2, MANF, MATN3 and PDIA4.

The protein resides in the endoplasmic reticulum. The catalysed reaction is Catalyzes the rearrangement of -S-S- bonds in proteins.. In terms of biological role, protein disulfide isomerase. Might play a role in the unfolded protein response. May regulate transport of alpha4-beta2 neuronal acetylcholine receptor. The chain is Protein disulfide isomerase CRELD2 (CRELD2) from Bos taurus (Bovine).